A 428-amino-acid polypeptide reads, in one-letter code: Probable anion transporter 6 (428 aa).

The first 22 residues, Met1–Ile22, serve as a signal peptide directing secretion. A run of 11 helical transmembrane segments spans residues Met47–Ala67, Leu74–Pro94, Ile98–Ile118, Leu137–Val157, Ser164–Ala184, Ile221–Leu241, Leu269–Ile289, Lys301–Phe321, Ala327–Val347, Phe356–Val376, and Thr401–Ser421.

The protein belongs to the major facilitator superfamily. Sodium/anion cotransporter (TC 2.A.1.14) family.

Its subcellular location is the cell membrane. Its function is as follows. Probable anion transporter. This Oryza sativa subsp. japonica (Rice) protein is Probable anion transporter 6 (PHT4;6).